The chain runs to 387 residues: Phosphoglycerate kinase (387 aa).

Substrate-binding positions include 21–23, R36, 59–62, R113, and R146; these read DLN and HLGR. Residues K197, E314, and 340 to 343 each bind ATP; that span reads GGDT.

This sequence belongs to the phosphoglycerate kinase family. As to quaternary structure, monomer.

The protein resides in the cytoplasm. The catalysed reaction is (2R)-3-phosphoglycerate + ATP = (2R)-3-phospho-glyceroyl phosphate + ADP. It functions in the pathway carbohydrate degradation; glycolysis; pyruvate from D-glyceraldehyde 3-phosphate: step 2/5. In Yersinia pestis bv. Antiqua (strain Antiqua), this protein is Phosphoglycerate kinase.